A 623-amino-acid chain; its full sequence is Glutathione import ATP-binding protein GsiA (623 aa).

2 consecutive ABC transporter domains span residues 15-269 (VENL…RALL) and 314-564 (LRVR…RKLL). ATP contacts are provided by residues 49–56 (GESGSGKS) and 357–364 (GESGSGKS).

It belongs to the ABC transporter superfamily. Glutathione importer (TC 3.A.1.5.11) family. As to quaternary structure, the complex is composed of two ATP-binding proteins (GsiA), two transmembrane proteins (GsiC and GsiD) and a solute-binding protein (GsiB).

It is found in the cell inner membrane. It catalyses the reaction glutathione(out) + ATP + H2O = glutathione(in) + ADP + phosphate + H(+). In terms of biological role, part of the ABC transporter complex GsiABCD involved in glutathione import. Responsible for energy coupling to the transport system. The chain is Glutathione import ATP-binding protein GsiA from Shigella sonnei (strain Ss046).